The primary structure comprises 310 residues: Carbamate kinase 1 (310 aa).

This sequence belongs to the carbamate kinase family.

It is found in the cytoplasm. The enzyme catalyses hydrogencarbonate + NH4(+) + ATP = carbamoyl phosphate + ADP + H2O + H(+). It participates in metabolic intermediate metabolism; carbamoyl phosphate degradation; CO(2) and NH(3) from carbamoyl phosphate: step 1/1. The polypeptide is Carbamate kinase 1 (arcC1) (Staphylococcus epidermidis (strain ATCC 12228 / FDA PCI 1200)).